Here is a 376-residue protein sequence, read N- to C-terminus: Putative C-mannosyltransferase DPY19L2P2 (376 aa).

The N-linked (GlcNAc...) asparagine glycan is linked to asparagine 32. Helical transmembrane passes span 52 to 72 (ACFYVGVIFILNGLMMGLFFI), 107 to 127 (LRESFSYPFLVLQMYVLTLIL), 154 to 174 (AQFILFTQIASLFPMYVVGYI), 182 to 202 (IIYMNMISVTLSFILMFGNSM), 233 to 253 (LNCWLIQGSAWWCGTIILKFL), and 299 to 319 (LLIYTKTLLLPVVMVITCFIF).

The protein belongs to the dpy-19 family. Fibroblast, lung, lymphoblast, spleen and testis.

The protein localises to the membrane. Probable C-mannosyltransferase that mediates C-mannosylation of tryptophan residues on target proteins. This chain is Putative C-mannosyltransferase DPY19L2P2 (DPY19L2P2), found in Homo sapiens (Human).